A 561-amino-acid chain; its full sequence is Dihydroxy-acid dehydratase (561 aa).

Cys-50 serves as a coordination point for [2Fe-2S] cluster. Asp-82 is a Mg(2+) binding site. Cys-123 serves as a coordination point for [2Fe-2S] cluster. Mg(2+)-binding residues include Asp-124 and Lys-125. Position 125 is an N6-carboxylysine (Lys-125). Cys-195 contacts [2Fe-2S] cluster. Position 447 (Glu-447) interacts with Mg(2+). Ser-473 acts as the Proton acceptor in catalysis.

It belongs to the IlvD/Edd family. In terms of assembly, homodimer. The cofactor is [2Fe-2S] cluster. Requires Mg(2+) as cofactor.

The catalysed reaction is (2R)-2,3-dihydroxy-3-methylbutanoate = 3-methyl-2-oxobutanoate + H2O. The enzyme catalyses (2R,3R)-2,3-dihydroxy-3-methylpentanoate = (S)-3-methyl-2-oxopentanoate + H2O. It functions in the pathway amino-acid biosynthesis; L-isoleucine biosynthesis; L-isoleucine from 2-oxobutanoate: step 3/4. The protein operates within amino-acid biosynthesis; L-valine biosynthesis; L-valine from pyruvate: step 3/4. Its function is as follows. Functions in the biosynthesis of branched-chain amino acids. Catalyzes the dehydration of (2R,3R)-2,3-dihydroxy-3-methylpentanoate (2,3-dihydroxy-3-methylvalerate) into 2-oxo-3-methylpentanoate (2-oxo-3-methylvalerate) and of (2R)-2,3-dihydroxy-3-methylbutanoate (2,3-dihydroxyisovalerate) into 2-oxo-3-methylbutanoate (2-oxoisovalerate), the penultimate precursor to L-isoleucine and L-valine, respectively. This chain is Dihydroxy-acid dehydratase, found in Crocosphaera subtropica (strain ATCC 51142 / BH68) (Cyanothece sp. (strain ATCC 51142)).